The chain runs to 1071 residues: ATP-dependent helicase/deoxyribonuclease subunit B (1071 aa).

This sequence belongs to the helicase family. AddB/RexB type 2 subfamily. In terms of assembly, heterodimer of AddA and RexB. Requires Mg(2+) as cofactor.

The heterodimer acts as both an ATP-dependent DNA helicase and an ATP-dependent, dual-direction single-stranded exonuclease. Recognizes the chi site generating a DNA molecule suitable for the initiation of homologous recombination. This subunit has 5' -&gt; 3' nuclease activity but not helicase activity. In Streptococcus pyogenes serotype M4 (strain MGAS10750), this protein is ATP-dependent helicase/deoxyribonuclease subunit B.